Reading from the N-terminus, the 295-residue chain is UDP-N-acetylenolpyruvoylglucosamine reductase (295 aa).

Positions 23 to 188 constitute an FAD-binding PCMH-type domain; that stretch reads KVGGPADFLA…ISAKFALKPG (166 aa). Residue Arg167 is part of the active site. Catalysis depends on Ser217, which acts as the Proton donor. Residue Glu287 is part of the active site.

Belongs to the MurB family. Requires FAD as cofactor.

It localises to the cytoplasm. The enzyme catalyses UDP-N-acetyl-alpha-D-muramate + NADP(+) = UDP-N-acetyl-3-O-(1-carboxyvinyl)-alpha-D-glucosamine + NADPH + H(+). It participates in cell wall biogenesis; peptidoglycan biosynthesis. In terms of biological role, cell wall formation. This chain is UDP-N-acetylenolpyruvoylglucosamine reductase, found in Streptococcus pyogenes serotype M12 (strain MGAS9429).